Reading from the N-terminus, the 226-residue chain is Pathogenesis-related protein R major form (226 aa).

A signal peptide spans 1-25 (MNFLKSFPFFAFLYFGQYFVAVTHA). Disulfide bonds link cysteine 34-cysteine 225, cysteine 75-cysteine 85, cysteine 90-cysteine 96, cysteine 140-cysteine 214, cysteine 145-cysteine 197, cysteine 153-cysteine 163, cysteine 167-cysteine 176, and cysteine 177-cysteine 184.

The protein belongs to the thaumatin family.

Its subcellular location is the vacuole. This is Pathogenesis-related protein R major form from Nicotiana tabacum (Common tobacco).